We begin with the raw amino-acid sequence, 544 residues long: NADP-dependent malic enzyme (544 aa).

The disordered stretch occupies residues 1-22 (MQNKPSFILRNPSANKGTGFNN). Positions 12-21 (PSANKGTGFN) are enriched in polar residues. Tyr-92 serves as the catalytic Proton donor. An NAD(+)-binding site is contributed by Arg-145. The Proton acceptor role is filled by Lys-163. Positions 234, 235, and 258 each coordinate a divalent metal cation. NAD(+) is bound at residue Asp-258. An NADP(+)-binding site is contributed by 287 to 303 (VFLGAGSAGIGVADCIM). Asn-400 is a binding site for NAD(+).

The protein belongs to the malic enzymes family. In terms of assembly, homotetramer. The cofactor is Mg(2+). Requires Mn(2+) as cofactor. Expressed in the fruiting body.

The protein resides in the cytoplasm. It carries out the reaction (S)-malate + NADP(+) = pyruvate + CO2 + NADPH. The catalysed reaction is oxaloacetate + H(+) = pyruvate + CO2. The chain is NADP-dependent malic enzyme (malA) from Dictyostelium discoideum (Social amoeba).